A 370-amino-acid polypeptide reads, in one-letter code: MAEASIEKTQILQKYLELDQRGRIIAEYVWIDGTGNLRSKGRTLKKRITSIDQLPEWNFDGSSTNQAPGHDSDIYLKPVAYYPDPFRRGDNIVVLAACYNNDGTPNKFNHRHEAAKLFAAHKDEEIWFGLEQEYTLFDMYDDVYGWPKGGYPAPQGPYYCGVGAGKVYARDMIEAHYRACLYAGLEISGINAEVMPSQWEFQVGPCTGIDMGDQLWMARYFLHRVAEEFGIKISFHPKPLKGDWNGAGCHTNVSTKEMRQPGGMKYIEQAIEKLSKRHAEHIKLYGSDNDMRLTGRHETASMTAFSSGVANRGSSIRIPRSVAKEGYGYFEDRRPASNIDPYLVTGIMCETVCGAIDNADMTKEFERESS.

N-acetylalanine is present on Ala-2. Ser-5 bears the Phosphoserine mark. The GS beta-grasp domain occupies 24–103; that stretch reads IIAEYVWIDG…VLAACYNNDG (80 aa). Residues 110–370 enclose the GS catalytic domain; it reads HRHEAAKLFA…MTKEFERESS (261 aa). Residues Lys-283, Lys-324, and Lys-363 each participate in a glycyl lysine isopeptide (Lys-Gly) (interchain with G-Cter in ubiquitin) cross-link.

This sequence belongs to the glutamine synthetase family. As to quaternary structure, homooctamer.

It is found in the cytoplasm. The catalysed reaction is L-glutamate + NH4(+) + ATP = L-glutamine + ADP + phosphate + H(+). In Saccharomyces cerevisiae (strain ATCC 204508 / S288c) (Baker's yeast), this protein is Glutamine synthetase (GLN1).